Consider the following 145-residue polypeptide: 3-dehydroquinate dehydratase (145 aa).

The active-site Proton acceptor is the Y23. Residues N73, H79, and D86 each coordinate substrate. The active-site Proton donor is H99. Substrate is bound by residues 100-101 (LS) and R110.

This sequence belongs to the type-II 3-dehydroquinase family. In terms of assembly, homododecamer.

The enzyme catalyses 3-dehydroquinate = 3-dehydroshikimate + H2O. Its pathway is metabolic intermediate biosynthesis; chorismate biosynthesis; chorismate from D-erythrose 4-phosphate and phosphoenolpyruvate: step 3/7. Functionally, catalyzes a trans-dehydration via an enolate intermediate. The protein is 3-dehydroquinate dehydratase of Desulfitobacterium hafniense (strain Y51).